Here is a 391-residue protein sequence, read N- to C-terminus: Toluene efflux pump periplasmic linker protein TtgG (391 aa).

The signal sequence occupies residues 1-32; the sequence is MRAERWSQTVRQIRSPRALRVIPLTALMLISG. Residue Cys-33 is the site of N-palmitoyl cysteine attachment. The S-diacylglycerol cysteine moiety is linked to residue Cys-33. A coiled-coil region spans residues 107-136; that stretch reads RTYEAQLRRAEANRTSAQNLARRYETLLKT.

Belongs to the membrane fusion protein (MFP) (TC 8.A.1) family.

The protein localises to the cell inner membrane. In terms of biological role, the periplasmic linker component of an organic solvent efflux pump. Involved in export of a number of organic solvents, including toluene and styrene. This is the most important solvent efflux pump in this strain, although it can export AMP and some antibiotics. In Pseudomonas putida (strain DOT-T1E), this protein is Toluene efflux pump periplasmic linker protein TtgG (ttgG).